A 351-amino-acid chain; its full sequence is Tsukushi-A (351 aa).

The N-terminal stretch at 1 to 17 (MALSSWIFFLLVHGIVG) is a signal peptide. LRR repeat units follow at residues 59–82 (PLDTSYLDLSSNRLKRINESVLSG), 85–108 (YTTLMNLNLSYNQIVKISYSTFSK), 109–132 (LRYLESLDLSHNLLETLPDGSFLY), 134–155 (RLTELDLSSNKIQKVGVGAFTL), 158–181 (QGRSMTINLANNEIHSIFRGAERP), 182–203 (VPNIHSLMLYGNQLLSVPDLHG), 204–226 (IPLRHLNLDRNPLSKIEKVSFLG), 252–276 (LTSLLELDLSNNPNLKSLSSDMFFG), and 277–300 (LKALQELNLAYSGVASLPKDIMLH).

In terms of assembly, interacts with bmp4. Interacts with dll1 (via extracellular region). Interacts with fgf8; inhibits fgf8 signaling. Interacts with nodal2/Xnr2; enhances nodal2 activity. During embryogenesis, localized to the animal hemisphere during late blastula and gastrula stages. At stage 10, expression is also detected around the dorsal blastopore lip. Expressed in the mandibular crest segment, branchial crest segment and differentiating somites at stage 21/22. Expressed in the germ ring including the shield at shield stage and in the tailbud at the 10-somite stage. At the early neurula stage (stage 13), expression is hardly detectable in the presumptive neural plate region, and restricted to the non-neural ectoderm where its levels increase by stage 14, especially in the presumptive anterior neural fold. Also expressed in the prospective cranial neural crest. At the early tailbud stage (stage 23), expressed in cranial neural crest cells, the dorsal retina and the lens placode.

It is found in the secreted. Contributes to various developmental events through its interactions with multiple signaling pathways. Dorsalizing factor which functions as an inhibitor of bone morphogenetic proteins (BMP) during gastrulation. Promotes dll1-dependent activation of Notch signaling and is required for neural crest formation. Induces endoderm and dorsal mesoderm formation by enhancing nodal2/Xnr2 activity while inhibiting ventrolateral mesoderm formation through inhibition of fgf8. This Xenopus laevis (African clawed frog) protein is Tsukushi-A.